The chain runs to 145 residues: Small ribosomal subunit protein bS6 (145 aa).

Over residues 113–132 (ENMKKNERKAPKEPVKKDEE) the composition is skewed to basic and acidic residues. Residues 113 to 145 (ENMKKNERKAPKEPVKKDEEENKESEEEITSEE) form a disordered region. Over residues 133-145 (ENKESEEEITSEE) the composition is skewed to acidic residues.

This sequence belongs to the bacterial ribosomal protein bS6 family.

Binds together with bS18 to 16S ribosomal RNA. The protein is Small ribosomal subunit protein bS6 of Campylobacter hominis (strain ATCC BAA-381 / DSM 21671 / CCUG 45161 / LMG 19568 / NCTC 13146 / CH001A).